Here is a 498-residue protein sequence, read N- to C-terminus: Serine hydroxymethyltransferase, mitochondrial (498 aa).

At Lys-273 the chain carries N6-(pyridoxal phosphate)lysine.

Belongs to the SHMT family. In terms of assembly, homotetramer. Pyridoxal 5'-phosphate serves as cofactor.

It is found in the mitochondrion. It catalyses the reaction (6R)-5,10-methylene-5,6,7,8-tetrahydrofolate + glycine + H2O = (6S)-5,6,7,8-tetrahydrofolate + L-serine. It functions in the pathway one-carbon metabolism; tetrahydrofolate interconversion. In terms of biological role, interconversion of serine and glycine. This is Serine hydroxymethyltransferase, mitochondrial (SHM1) from Kluyveromyces lactis (strain ATCC 8585 / CBS 2359 / DSM 70799 / NBRC 1267 / NRRL Y-1140 / WM37) (Yeast).